The following is a 401-amino-acid chain: S-adenosylmethionine synthase (401 aa).

His15 contacts ATP. A Mg(2+)-binding site is contributed by Asp17. Glu43 lines the K(+) pocket. Positions 56 and 99 each coordinate L-methionine. The segment at Gln99–Thr109 is flexible loop. The segment at Pro101–Leu132 is disordered. ATP contacts are provided by residues Asp174–Lys176, Asp254, Arg260–Lys261, Ala277, and Lys281. Asp254 provides a ligand contact to L-methionine. Position 285 (Lys285) interacts with L-methionine.

It belongs to the AdoMet synthase family. As to quaternary structure, homotetramer; dimer of dimers. Requires Mg(2+) as cofactor. The cofactor is K(+).

Its subcellular location is the cytoplasm. The enzyme catalyses L-methionine + ATP + H2O = S-adenosyl-L-methionine + phosphate + diphosphate. Its pathway is amino-acid biosynthesis; S-adenosyl-L-methionine biosynthesis; S-adenosyl-L-methionine from L-methionine: step 1/1. Functionally, catalyzes the formation of S-adenosylmethionine (AdoMet) from methionine and ATP. The overall synthetic reaction is composed of two sequential steps, AdoMet formation and the subsequent tripolyphosphate hydrolysis which occurs prior to release of AdoMet from the enzyme. The polypeptide is S-adenosylmethionine synthase (Corynebacterium urealyticum (strain ATCC 43042 / DSM 7109)).